A 335-amino-acid chain; its full sequence is Dihydroorotate dehydrogenase (quinone) (335 aa).

FMN contacts are provided by residues 58-62 and threonine 82; that span reads AGADK. Lysine 62 is a substrate binding site. Residue 107 to 111 participates in substrate binding; sequence NRNGF. FMN contacts are provided by asparagine 135 and asparagine 168. Asparagine 168 contacts substrate. Serine 171 (nucleophile) is an active-site residue. Asparagine 173 contacts substrate. FMN-binding residues include lysine 213 and glycine 241. 242 to 243 lines the substrate pocket; that stretch reads NT. FMN-binding positions include glycine 264, glycine 293, and 314–315; that span reads YS.

The protein belongs to the dihydroorotate dehydrogenase family. Type 2 subfamily. In terms of assembly, monomer. Requires FMN as cofactor.

The protein resides in the cell membrane. The catalysed reaction is (S)-dihydroorotate + a quinone = orotate + a quinol. Its pathway is pyrimidine metabolism; UMP biosynthesis via de novo pathway; orotate from (S)-dihydroorotate (quinone route): step 1/1. Functionally, catalyzes the conversion of dihydroorotate to orotate with quinone as electron acceptor. The sequence is that of Dihydroorotate dehydrogenase (quinone) from Actinobacillus pleuropneumoniae serotype 7 (strain AP76).